Consider the following 548-residue polypeptide: Chaperonin GroEL (548 aa).

ATP is bound by residues 30-33 (TLGP), K51, 87-91 (DGTTT), G415, 479-481 (NAA), and D495.

Belongs to the chaperonin (HSP60) family. Forms a cylinder of 14 subunits composed of two heptameric rings stacked back-to-back. Interacts with the co-chaperonin GroES.

Its subcellular location is the cytoplasm. It carries out the reaction ATP + H2O + a folded polypeptide = ADP + phosphate + an unfolded polypeptide.. Functionally, together with its co-chaperonin GroES, plays an essential role in assisting protein folding. The GroEL-GroES system forms a nano-cage that allows encapsulation of the non-native substrate proteins and provides a physical environment optimized to promote and accelerate protein folding. In Pseudomonas fluorescens (strain SBW25), this protein is Chaperonin GroEL.